Consider the following 877-residue polypeptide: Alanine--tRNA ligase (877 aa).

Residues His567, His571, Cys669, and His673 each contribute to the Zn(2+) site.

This sequence belongs to the class-II aminoacyl-tRNA synthetase family. Zn(2+) serves as cofactor.

It is found in the cytoplasm. The enzyme catalyses tRNA(Ala) + L-alanine + ATP = L-alanyl-tRNA(Ala) + AMP + diphosphate. In terms of biological role, catalyzes the attachment of alanine to tRNA(Ala) in a two-step reaction: alanine is first activated by ATP to form Ala-AMP and then transferred to the acceptor end of tRNA(Ala). Also edits incorrectly charged Ser-tRNA(Ala) and Gly-tRNA(Ala) via its editing domain. The sequence is that of Alanine--tRNA ligase from Rickettsia prowazekii (strain Madrid E).